We begin with the raw amino-acid sequence, 50 residues long: Ampulexin 2 (50 aa).

The first 26 residues, 1–26, serve as a signal peptide directing secretion; that stretch reads MKAIMVLFYVMTLTIIGSFSMVSGSP.

As to quaternary structure, dimer; disulfide-linked. In terms of tissue distribution, expressed in venom sac and, to a lesser extent, in venom gland. Not expressed in brain.

The protein localises to the secreted. Functionally, amphipathic peptide which probably adopts an alpha-helical structure. Has no antimicrobial activity against E.coli DH5alpha or B.thuringiensis. Is not cytotoxic in vitro. In Ampulex compressa (Emerald cockroach wasp), this protein is Ampulexin 2.